The sequence spans 388 residues: DNA replication and repair protein RecF (388 aa).

30 to 37 (GNNAQGKS) serves as a coordination point for ATP.

This sequence belongs to the RecF family.

The protein resides in the cytoplasm. Functionally, the RecF protein is involved in DNA metabolism; it is required for DNA replication and normal SOS inducibility. RecF binds preferentially to single-stranded, linear DNA. It also seems to bind ATP. This is DNA replication and repair protein RecF from Picosynechococcus sp. (strain ATCC 27264 / PCC 7002 / PR-6) (Agmenellum quadruplicatum).